Consider the following 245-residue polypeptide: Derlin-1 (245 aa).

Residues 1 to 17 (MDAGVWYRSLPRFTRYW) are Cytoplasmic-facing. A helical transmembrane segment spans residues 18–38 (LTATVVLSMLCRFDVIPLHWL). The Lumenal portion of the chain corresponds to 39-58 (HLDRSAVFSKLQLWRCMTSL). The helical transmembrane segment at 59-79 (FVFPISSNTAFHFLINCFFIV) threads the bilayer. Topologically, residues 80–99 (QYSSKLEKDQYSRSPADYLY) are cytoplasmic. Residues 100–120 (LLIVSAVLANIGGMIFNVYFL) form a helical membrane-spanning segment. The Lumenal segment spans residues 121–156 (MDTLVLAITYIWCQLNKDVTVSFWFGTRFKAMYLPW). The helical transmembrane segment at 157-177 (VLAAFEFIFHFSLASLVGIFV) threads the bilayer. Residues 178-245 (GHVYYFFKFQ…WGRGMTLGRN (68 aa)) lie on the Cytoplasmic side of the membrane. Positions 218 to 245 (FGLPPESRAPPRQATESPWGRGMTLGRN) are disordered.

This sequence belongs to the derlin family.

It is found in the endoplasmic reticulum membrane. Its function is as follows. May be involved in the degradation process of specific misfolded endoplasmic reticulum (ER) luminal proteins. May also involved in endoplasmic reticulum stress-induced pre-emptive quality control, a mechanism that selectively attenuates the translocation of newly synthesized proteins into the endoplasmic reticulum and reroutes them to the cytosol for proteasomal degradation. This Drosophila melanogaster (Fruit fly) protein is Derlin-1.